The primary structure comprises 310 residues: Methionyl-tRNA formyltransferase (310 aa).

111 to 114 is a binding site for (6S)-5,6,7,8-tetrahydrofolate; the sequence is SLLP.

Belongs to the Fmt family.

The catalysed reaction is L-methionyl-tRNA(fMet) + (6R)-10-formyltetrahydrofolate = N-formyl-L-methionyl-tRNA(fMet) + (6S)-5,6,7,8-tetrahydrofolate + H(+). Its function is as follows. Attaches a formyl group to the free amino group of methionyl-tRNA(fMet). The formyl group appears to play a dual role in the initiator identity of N-formylmethionyl-tRNA by promoting its recognition by IF2 and preventing the misappropriation of this tRNA by the elongation apparatus. The sequence is that of Methionyl-tRNA formyltransferase from Nitrobacter hamburgensis (strain DSM 10229 / NCIMB 13809 / X14).